Consider the following 202-residue polypeptide: MRLFVGLGNPGTKYQGNRHNIGFMVVDEIARRHGFAPWRRRFQGEASEGTLDRERVIVLKPATYMNNSGNAVQDAVQFFKLKEADVVVFHDEIELPPAKVRVKVGGGIAGHNGLRSISAHIGNDYRRVRLGVGHPGVKELVHAHVLNDFARSERSWVEALVDTVAENAALLVAAKDSAFQNKVHLAMQAKGFADNGGEDKQN.

Tyr14 contributes to the tRNA binding site. Catalysis depends on His19, which acts as the Proton acceptor. The tRNA site is built by Tyr64, Asn66, and Asn112.

The protein belongs to the PTH family. As to quaternary structure, monomer.

The protein localises to the cytoplasm. The catalysed reaction is an N-acyl-L-alpha-aminoacyl-tRNA + H2O = an N-acyl-L-amino acid + a tRNA + H(+). Hydrolyzes ribosome-free peptidyl-tRNAs (with 1 or more amino acids incorporated), which drop off the ribosome during protein synthesis, or as a result of ribosome stalling. In terms of biological role, catalyzes the release of premature peptidyl moieties from peptidyl-tRNA molecules trapped in stalled 50S ribosomal subunits, and thus maintains levels of free tRNAs and 50S ribosomes. This chain is Peptidyl-tRNA hydrolase, found in Nitrobacter winogradskyi (strain ATCC 25391 / DSM 10237 / CIP 104748 / NCIMB 11846 / Nb-255).